Consider the following 145-residue polypeptide: 3-dehydroquinate dehydratase (145 aa).

The active-site Proton acceptor is the Tyr24. Asn75, His81, and Asp88 together coordinate substrate. Catalysis depends on His101, which acts as the Proton donor. Residues 102–103 (IS) and Arg112 contribute to the substrate site.

It belongs to the type-II 3-dehydroquinase family. In terms of assembly, homododecamer.

The enzyme catalyses 3-dehydroquinate = 3-dehydroshikimate + H2O. Its pathway is metabolic intermediate biosynthesis; chorismate biosynthesis; chorismate from D-erythrose 4-phosphate and phosphoenolpyruvate: step 3/7. Its function is as follows. Catalyzes a trans-dehydration via an enolate intermediate. This is 3-dehydroquinate dehydratase from Rhizobium johnstonii (strain DSM 114642 / LMG 32736 / 3841) (Rhizobium leguminosarum bv. viciae).